Consider the following 244-residue polypeptide: Probable H/ACA ribonucleoprotein complex subunit 1-like protein (244 aa).

Disordered stretches follow at residues 1 to 53 (MSFR…GGYD) and 145 to 244 (FLPQ…TKFE). RGG-box stretches follow at residues 4 to 51 (RGGR…GRGG) and 153 to 222 (RGRG…RGRG). The span at 160-173 (RGGDRGGRGSDRGG) shows a compositional bias: basic and acidic residues. Gly residues-rich tracts occupy residues 174 to 201 (RGGFGRGGGGGFRGGDRGGFGGGRGGFR) and 208 to 217 (FRGGRGGDFG). The segment covering 218–228 (GRGRGDFKRSY) has biased composition (basic and acidic residues).

This sequence belongs to the GAR1 family. As to quaternary structure, component of the small nucleolar ribonucleoprotein particle containing H/ACA-type snoRNAs (H/ACA snoRNPs).

It is found in the nucleus. The protein localises to the nucleolus. Functionally, required for ribosome biogenesis. Part of a complex which catalyzes pseudouridylation of rRNA. This involves the isomerization of uridine such that the ribose is subsequently attached to C5, instead of the normal N1. Pseudouridine ('psi') residues may serve to stabilize the conformation of rRNAs. Involved in phase separation into sub-nucleolar condensates. Essential for normal development and also plays a role in fertility. The chain is Probable H/ACA ribonucleoprotein complex subunit 1-like protein from Caenorhabditis elegans.